A 90-amino-acid chain; its full sequence is uncharacterized protein (90 aa).

This is an uncharacterized protein from Escherichia coli (strain K12).